Here is a 49-residue protein sequence, read N- to C-terminus: Large ribosomal subunit protein bL33A (49 aa).

A disordered region spans residues 21–49; the sequence is KNKRNNPERVEMKKYCSRDNKHTLHRETK. Residues 25–49 show a composition bias toward basic and acidic residues; it reads NNPERVEMKKYCSRDNKHTLHRETK.

It belongs to the bacterial ribosomal protein bL33 family.

This is Large ribosomal subunit protein bL33A from Staphylococcus epidermidis (strain ATCC 35984 / DSM 28319 / BCRC 17069 / CCUG 31568 / BM 3577 / RP62A).